Reading from the N-terminus, the 658-residue chain is Threonine--tRNA ligase (658 aa).

A TGS domain is found at 1–64 (MSFSISLSFP…EQSGQVEIIT (64 aa)). The interval 246–549 (DHRRLGREMD…LIENFAGHMP (304 aa)) is catalytic. Zn(2+) is bound by residues cysteine 343, histidine 394, and histidine 526.

Belongs to the class-II aminoacyl-tRNA synthetase family. In terms of assembly, homodimer. Zn(2+) is required as a cofactor.

The protein resides in the cytoplasm. The enzyme catalyses tRNA(Thr) + L-threonine + ATP = L-threonyl-tRNA(Thr) + AMP + diphosphate + H(+). In terms of biological role, catalyzes the attachment of threonine to tRNA(Thr) in a two-step reaction: L-threonine is first activated by ATP to form Thr-AMP and then transferred to the acceptor end of tRNA(Thr). Also edits incorrectly charged L-seryl-tRNA(Thr). The protein is Threonine--tRNA ligase of Bartonella bacilliformis (strain ATCC 35685 / KC583 / Herrer 020/F12,63).